We begin with the raw amino-acid sequence, 465 residues long: MARNRQACDCCCIRRVKCDRKKPCKCCLQHNLQCTYLRPLKKRGPKPVKVRNLKKVDDVQVFSKSSSGGIMKVPKALIDQCLRLYNDKLYVIWPLLCYDDLYELLEKRYDETCVYWFLVSLSAATLSDLQTEIESEGGVTFTGIQLSSFCMSSRQEFDDFNGSDIFKIMTYYCLNRCYAQMSNSRTSYRLSCEAVGLIKLAGFHREETLKLLPFDEQQLGRKVYYLLLLTERYFSVYTHCATSLDTTIAPPQPENVTDPRLSLDSFLEMIRVFTVPGKCFFDALATDSANVTCTEDSLKKIWRELHTVPLEIEPWSYGYVDISFSRHWIRTLAWKLVLQISGMRISFLSNSKNTHIPVEIARDMLEDTFLIPKNLYAVHGPGISVKALEIADALVDVVNQYDQNAESEAWNFLFDISKFVFSLKHCDSTLVDKFTTKCQCALITLPLSNPLESTDGSKEDVDALP.

The segment at residues 8 to 34 is a DNA-binding region (zn(2)-C6 fungal-type); that stretch reads CDCCCIRRVKCDRKKPCKCCLQHNLQC.

Belongs to the MAL13 family.

It is found in the nucleus. Functionally, transcription factor that regulates respiratory growth and plays a critical role in stress adaptation during non-fermentative growth. Binds to promoters of genes involved in non-fermentative metabolism, including processes such as gluconeogenesis (PCK1, FBP1 and MDH2), glyoxylate shunt (MLS1 and ICL1) and the tricarboxylic acid cycle (ACO1). Plays a role in maintaining mitochondrial morphology and function. Also plays a role in tolerance to pH and osmotic stress, especially during the oxidative metabolism. The chain is Respiratory transcription factor ZNF1 from Saccharomyces cerevisiae (strain ATCC 204508 / S288c) (Baker's yeast).